The primary structure comprises 635 residues: MARGLPSTACLARFCQKLNRLKPLEESSMETSLRRCLSTLDLTLLGVGGMVGSGLYVLTGTVAKDMAGPAVLLSFLVAAVASLLAALCYAEFGARVPRTGSAYLFTYVSMGEIWAFLIGWNVLLEYLIGGAAVARAWSGYLDAIFNHSIRNFTESHLGVWQVPFLAHYPDFLAAGILLVASAFVSCGARVSSWLNHTFSAISLIVILFIIVLGFILARPHNWSAEEGGFAPFGFSGILAGTATCFYAFVGFDVIAASSEEAKNPRWAVPMAIAISLSLAAGAYILVSTVLTLMVPWHSLDPDSALADAFYRRGYSWAGFIVAVGSICAMNTVLLSNLFSLPRIVYAMAADGLFFQVFARVHPRTQVPVVGILVFGVLMALLALLLDLEALVQFLSIGTLLAYTFVATSIIVLRFQKASPPSSPCLASPGPTAKKYDSFSDHIQLVGAEQTSMSEPGQLRPALKPFLGFLDGCSPGTAVAWALGILVASAISLACVLVFGNSDLHLPQWGYVLLLVISGAVFLSSLLVLGAHQQQKKQDTFQIPLVPLTPALSILLNTCLMLKLSYLTWLRFIFWLLVGLVVYFGYGIWHSKENQREPLELTTAHYVVFPSGSLEETVQAVQPSSQSPVRESGCTE.

A run of 3 helical transmembrane segments spans residues 42 to 62 (LTLL…TGTV), 66 to 86 (MAGP…LLAA), and 113 to 133 (IWAF…GAAV). 3 N-linked (GlcNAc...) asparagine glycosylation sites follow: Asn146, Asn151, and Asn195. A helical membrane pass occupies residues 197–217 (TFSAISLIVILFIIVLGFILA). Asn221 is a glycosylation site (N-linked (GlcNAc...) asparagine). The next 5 helical transmembrane spans lie at 229-249 (FAPF…YAFV), 270-290 (MAIA…STVL), 318-338 (GFIV…SNLF), 365-385 (QVPV…ALLL), and 391-411 (VQFL…SIIV). Phosphoserine occurs at positions 422 and 427. 4 consecutive transmembrane segments (helical) span residues 478-498 (VAWA…VLVF), 508-528 (WGYV…LLVL), 539-559 (TFQI…NTCL), and 567-587 (TWLR…GYGI).

This sequence belongs to the amino acid-polyamine-organocation (APC) superfamily. Cationic amino acid transporter (CAT) (TC 2.A.3.3) family.

Its subcellular location is the membrane. In terms of biological role, involved in the transport of the cationic amino acids (arginine, lysine and ornithine). The protein is Cationic amino acid transporter 4 (Slc7a4) of Mus musculus (Mouse).